A 264-amino-acid polypeptide reads, in one-letter code: Hydroxyethylthiazole kinase (264 aa).

Met52 is a binding site for substrate. ATP-binding residues include Arg127 and Thr173. Gly200 is a binding site for substrate.

Belongs to the Thz kinase family. Requires Mg(2+) as cofactor.

It catalyses the reaction 5-(2-hydroxyethyl)-4-methylthiazole + ATP = 4-methyl-5-(2-phosphooxyethyl)-thiazole + ADP + H(+). It participates in cofactor biosynthesis; thiamine diphosphate biosynthesis; 4-methyl-5-(2-phosphoethyl)-thiazole from 5-(2-hydroxyethyl)-4-methylthiazole: step 1/1. Functionally, catalyzes the phosphorylation of the hydroxyl group of 4-methyl-5-beta-hydroxyethylthiazole (THZ). The protein is Hydroxyethylthiazole kinase of Pectobacterium atrosepticum (strain SCRI 1043 / ATCC BAA-672) (Erwinia carotovora subsp. atroseptica).